The primary structure comprises 902 residues: DNA mismatch repair protein MutS (902 aa).

ATP is bound at residue 647–654; it reads GPNMGGKS.

Belongs to the DNA mismatch repair MutS family.

Its function is as follows. This protein is involved in the repair of mismatches in DNA. It is possible that it carries out the mismatch recognition step. This protein has a weak ATPase activity. The polypeptide is DNA mismatch repair protein MutS (Nitrosospira multiformis (strain ATCC 25196 / NCIMB 11849 / C 71)).